The sequence spans 486 residues: Acetyl-coenzyme A carboxylase carboxyl transferase subunit beta, chloroplastic (486 aa).

A CoA carboxyltransferase N-terminal domain is found at 224–486 (LWVQCENCYG…FQFHGFFPRP (263 aa)). Zn(2+)-binding residues include C228, C231, C247, and C250. The C4-type zinc finger occupies 228–250 (CENCYGLNYKKFFSSKMNICEQC).

It belongs to the AccD/PCCB family. In terms of assembly, acetyl-CoA carboxylase is a heterohexamer composed of biotin carboxyl carrier protein, biotin carboxylase and 2 subunits each of ACCase subunit alpha and ACCase plastid-coded subunit beta (accD). Zn(2+) serves as cofactor.

The protein localises to the plastid. Its subcellular location is the chloroplast stroma. It carries out the reaction N(6)-carboxybiotinyl-L-lysyl-[protein] + acetyl-CoA = N(6)-biotinyl-L-lysyl-[protein] + malonyl-CoA. It participates in lipid metabolism; malonyl-CoA biosynthesis; malonyl-CoA from acetyl-CoA: step 1/1. Component of the acetyl coenzyme A carboxylase (ACC) complex. Biotin carboxylase (BC) catalyzes the carboxylation of biotin on its carrier protein (BCCP) and then the CO(2) group is transferred by the transcarboxylase to acetyl-CoA to form malonyl-CoA. This is Acetyl-coenzyme A carboxylase carboxyl transferase subunit beta, chloroplastic from Nymphaea alba (White water-lily).